The sequence spans 433 residues: Voltage-gated potassium channel regulatory subunit KCNG3 (433 aa).

Residues 1-165 (MTFGRGGAAS…RTFEEPTSSL (165 aa)) are Cytoplasmic-facing. A helical membrane pass occupies residues 166-187 (AAQILASVSVVFVIVSMVVLCA). At 188–217 (STLPDWRAAVADNRSLDDRSRYSASPGREP) the chain is on the extracellular side. The helical transmembrane segment at 218–239 (SGIIEAICIGWFTAECIVRFIV) threads the bilayer. The Cytoplasmic segment spans residues 240–250 (SKNKCEFVKRP). Residues 251–271 (LNIIDLLAITPYYISVLMTVF) form a helical membrane-spanning segment. Residues 272–281 (TGENSQLQRA) are Extracellular-facing. The helical; Voltage-sensor transmembrane segment at 282-302 (GVTLRVLRMMRIFWVIKLARH) threads the bilayer. Residues 303–317 (FIGLQTLGLTLKRCY) lie on the Cytoplasmic side of the membrane. The chain crosses the membrane as a helical span at residues 318–339 (REMAMLLVFICVAMAIFSALSQ). At 340 to 357 (LLEHGLDLETSNKDFASI) the chain is on the extracellular side. An intramembrane region (helical) is located at residues 358–369 (PAACWWVIISMT). The Selectivity filter motif lies at 370–375 (TVGYGD). Residues 370 to 377 (TVGYGDMY) lie within the membrane without spanning it. The Extracellular segment spans residues 378-384 (PITVPGR). A helical transmembrane segment spans residues 385–413 (ILGGVCVVSGIVLLALPITFIYHSFVQCY). At 414–433 (HELKFRSARYSRSLSAEFLN) the chain is on the cytoplasmic side.

This sequence belongs to the potassium channel family. G (TC 1.A.1.2) subfamily. Kv6.3/KCNG3 sub-subfamily. As to quaternary structure, heterotetramer with KCNB1. Does not form homomultimers.

Its subcellular location is the cell membrane. It localises to the cytoplasm. Regulatory subunit of the voltage-gated potassium (Kv) channel which, when coassembled with KCNB1, modulates the kinetics parameters of the heterotetrameric channel namely the inactivation and deactivation rate. Potassium channel subunit that does not form functional channels by itself. Reduces the deactivation rate. Moderately acceleratee activation. The polypeptide is Voltage-gated potassium channel regulatory subunit KCNG3 (Mus musculus (Mouse)).